Here is a 372-residue protein sequence, read N- to C-terminus: 4-hydroxy-3-methylbut-2-en-1-yl diphosphate synthase (flavodoxin) (372 aa).

Cysteine 270, cysteine 273, cysteine 305, and glutamate 312 together coordinate [4Fe-4S] cluster.

It belongs to the IspG family. It depends on [4Fe-4S] cluster as a cofactor.

The enzyme catalyses (2E)-4-hydroxy-3-methylbut-2-enyl diphosphate + oxidized [flavodoxin] + H2O + 2 H(+) = 2-C-methyl-D-erythritol 2,4-cyclic diphosphate + reduced [flavodoxin]. It functions in the pathway isoprenoid biosynthesis; isopentenyl diphosphate biosynthesis via DXP pathway; isopentenyl diphosphate from 1-deoxy-D-xylulose 5-phosphate: step 5/6. Converts 2C-methyl-D-erythritol 2,4-cyclodiphosphate (ME-2,4cPP) into 1-hydroxy-2-methyl-2-(E)-butenyl 4-diphosphate. This is 4-hydroxy-3-methylbut-2-en-1-yl diphosphate synthase (flavodoxin) from Escherichia coli O139:H28 (strain E24377A / ETEC).